Here is a 1437-residue protein sequence, read N- to C-terminus: Myomesin-3 (1437 aa).

A disordered region spans residues 1-49 (MTLPHSLGGAGDPRPPQAMEVHRLEHRQEEEQKEERQHSLRMGSSVRRR). The segment covering 20–38 (EVHRLEHRQEEEQKEERQH) has biased composition (basic and acidic residues). Residues 120–149 (RLLRQRRDWKTLRRRTEEKVQEAKELRELC) adopt a coiled-coil conformation. 2 Ig-like C2-type domains span residues 154-246 (PWFW…AKVL) and 269-361 (PSVE…TYVL). Fibronectin type-III domains are found at residues 375–469 (SPLN…VMGD), 503–598 (PPTN…LRGP), 604–696 (PPAQ…VKQA), 702–797 (APYG…CKEW), and 804–899 (PPYD…LEDK). Ig-like C2-type domains are found at residues 1120–1205 (PYFE…LDLT) and 1334–1423 (AKVV…VTIS).

Homodimer.

It is found in the cytoplasm. Its subcellular location is the myofibril. It localises to the sarcomere. The protein localises to the m line. In terms of biological role, may link the intermediate filament cytoskeleton to the M-disk of the myofibrils in striated muscle. This chain is Myomesin-3 (MYOM3), found in Homo sapiens (Human).